Reading from the N-terminus, the 1578-residue chain is MSSDLKYSLSSEPPQPQVQSPLLKILKGEVSETTELKKLHSFRLCLSSPKIIKQWAQRTLPNGEIVGSITNAQTVNYKTLKPEKGGLFCERVFGPVKDFYCSCGKQKTKQHPKVCPTCGVQYISSQSRRYKMGYIELVSPVTHIWYLKSSPSYISLLLNLKKKNLEALTYCSENLSLNIKSFQNELLFQNVLHLLKANPFALEKGLKKRKKRFLVNSNWFSFIFDNSYLIKANSGFQLKVKDFPFFLITKNQNLQNFMGVCSQSANGNEQILPEMEKQGKNTFQFSPFLTTVQKHGSSENGSFPELKREKDELELFKLIDSFSSKSPSKKKDFFRSEILTAFYKKYSKFHFSRFRSNKKSFLISLFSSSNNWYFNKNQNIGYFSIFNKNFKIFFSLLNYQILLKTIDKNSLANLLSPLFDNYLNDDSQVLFDDSIKKLNLTKNFRSNEDQELSTLLNSCFFLNKIGAIAQSPFSLAFYTQKSEKFYCFSPSFLNPFEKDSLSGKIFSLKKKKILPSQKMFELKPLTLFCSKKTKRNEVESENPNSNHMLPFIAFSKKQRCEEKADFFKQLRMIELESEKSRSPKDLLFLNKFPFKNEKKLKYNLQKRNKLHTLKNPIGNFKFRKYFSLRLDSSLKRSLLIYQIKNFKNGFEHSDFYSENQTSTNFTKFLVSRELEKSSKFSNSLFSFENFAQLLIFIFDFPAALERQRQSFSLRSYSKSANFRSQTSARGEVGGNFNLEVKQSQNYFLDWKLTNNYRNFYQSSEIQNLNCFFISNFLVKNAIPVSPLSLEQFVFNNETQKNLHLGNEDSRFFANLKKPIKKLGLLKNSFLAETLANAKANAHNLKENRTPVIQDKENESQTFSQLFFDQIDQKEGSSLKSKDLNFTNWNNKKITRFIELLEKTLFLKKPGLVNNYYTISQSLQWPCQKDWARFLNYMTNTADKTDSLIPSYLERGISFDLVLTGAGSIKKLLSLFTPMGKKASIEIVAKQINGTLLKLNRDIKRLEDFFKFEIFFIDDQEIIEKVFMKLVILRSLRSKALRRLKVLRPFKGSHVLPEWMVLSVLPILPPALRPIIPLDSQQVAVSDLNKLYQTVLFRNKRVQRFYNDYYSLNFSEEMRYAQRLLQEAVDALIENGKGDSAAITASNNRPLKSLSDMIKGKKGRFRQNLLGKRVDYSGRSVIVVGPKLRLHECGLPKEMAIELFQPFLIRRLIFKEVATNFISAKKLIKSNPESILDILREVMENRPVLLNRAPTLHRLGIQAFQPKLISGRAILLHPLVCAAFNADFDGDQMAVHIPLSFQACAEAWKLMGSRNNLLSPATGEPIILPSQDMVLGCYYLTTLDRVKIKQKLSQSSFLFPFLISKQGVHENLSTISSNSKGIENWILKKPSQKSEIRTLSSFYEINESERATFESKTNDTSILKLQDKKRRETLTFKRNRLSPVDTKLHLMDLSKNKNQNLFLNRFEKRANCKVWSDSNKYYSNWDQVLQSLNQQLIDLHSPIWLRWNFYFEFVLKKESFLEIRLDKYGNSVYINPNYQSYSNSKLEKIVFYIRTTPGRVLMNKLIFEALNKPSLKKSF.

Zn(2+)-binding residues include cysteine 101, cysteine 103, cysteine 115, and cysteine 118. Residues aspartate 1286, aspartate 1288, and aspartate 1290 each coordinate Mg(2+).

The protein belongs to the RNA polymerase beta' chain family. RpoC1 subfamily. As to quaternary structure, in plastids the minimal PEP RNA polymerase catalytic core is composed of four subunits: alpha, beta, beta', and beta''. When a (nuclear-encoded) sigma factor is associated with the core the holoenzyme is formed, which can initiate transcription. Mg(2+) is required as a cofactor. It depends on Zn(2+) as a cofactor.

It localises to the plastid. The protein resides in the chloroplast. It carries out the reaction RNA(n) + a ribonucleoside 5'-triphosphate = RNA(n+1) + diphosphate. Functionally, DNA-dependent RNA polymerase catalyzes the transcription of DNA into RNA using the four ribonucleoside triphosphates as substrates. The sequence is that of DNA-directed RNA polymerase subunit beta' from Tupiella akineta (Green alga).